We begin with the raw amino-acid sequence, 430 residues long: Adenylosuccinate synthetase (430 aa).

GTP contacts are provided by residues 12-18 (GDEGKGK) and 40-42 (GHT). Catalysis depends on D13, which acts as the Proton acceptor. 2 residues coordinate Mg(2+): D13 and G40. Residues 13–16 (DEGK), 38–41 (NAGH), T128, R142, Q223, T238, and R302 each bind IMP. The active-site Proton donor is H41. Position 298–304 (298–304 (VNTGRTR)) interacts with substrate. GTP contacts are provided by residues R304, 330-332 (KLD), and 412-414 (GVG).

This sequence belongs to the adenylosuccinate synthetase family. Homodimer. The cofactor is Mg(2+).

The protein localises to the cytoplasm. It catalyses the reaction IMP + L-aspartate + GTP = N(6)-(1,2-dicarboxyethyl)-AMP + GDP + phosphate + 2 H(+). It participates in purine metabolism; AMP biosynthesis via de novo pathway; AMP from IMP: step 1/2. Functionally, plays an important role in the de novo pathway of purine nucleotide biosynthesis. Catalyzes the first committed step in the biosynthesis of AMP from IMP. The protein is Adenylosuccinate synthetase of Corynebacterium ammoniagenes (Brevibacterium ammoniagenes).